A 110-amino-acid polypeptide reads, in one-letter code: Protein OPG154 (110 aa).

It belongs to the orthopoxvirus OPG154 protein family. In terms of assembly, homohexamers, covalently linked. Interacts with OPG144 and OPG153.

The protein localises to the virion. In terms of biological role, structural protein involved in the envelopment of mature virion (MV) to form the wrapped virion (WV). The wrapping consists of the addition of Golgi membranes to the mature virion. Participates in mature virion (MV) movement within the infected cell. May play an indirect role in MV-cell fusion. The chain is Protein OPG154 (OPG154) from Homo sapiens (Human).